The primary structure comprises 206 residues: Large ribosomal subunit protein uL4 (206 aa).

The interval 46 to 77 (GTRAQKDREQVKHSTKKPFKQKGTGNARAGMT) is disordered.

The protein belongs to the universal ribosomal protein uL4 family. Part of the 50S ribosomal subunit.

Its function is as follows. One of the primary rRNA binding proteins, this protein initially binds near the 5'-end of the 23S rRNA. It is important during the early stages of 50S assembly. It makes multiple contacts with different domains of the 23S rRNA in the assembled 50S subunit and ribosome. Forms part of the polypeptide exit tunnel. The polypeptide is Large ribosomal subunit protein uL4 (Acidovorax ebreus (strain TPSY) (Diaphorobacter sp. (strain TPSY))).